We begin with the raw amino-acid sequence, 107 residues long: Anti-adapter protein IraM (107 aa).

Belongs to the IraM/RssC family.

It localises to the cytoplasm. Inhibits RpoS proteolysis by regulating RssB activity, thereby increasing the stability of the sigma stress factor RpoS during magnesium starvation. The chain is Anti-adapter protein IraM from Escherichia coli (strain 55989 / EAEC).